The following is a 470-amino-acid chain: 3-isopropylmalate dehydratase large subunit (470 aa).

Cys351, Cys411, and Cys414 together coordinate [4Fe-4S] cluster.

The protein belongs to the aconitase/IPM isomerase family. LeuC type 1 subfamily. In terms of assembly, heterodimer of LeuC and LeuD. [4Fe-4S] cluster is required as a cofactor.

The catalysed reaction is (2R,3S)-3-isopropylmalate = (2S)-2-isopropylmalate. It functions in the pathway amino-acid biosynthesis; L-leucine biosynthesis; L-leucine from 3-methyl-2-oxobutanoate: step 2/4. Functionally, catalyzes the isomerization between 2-isopropylmalate and 3-isopropylmalate, via the formation of 2-isopropylmaleate. The chain is 3-isopropylmalate dehydratase large subunit from Rhodopseudomonas palustris (strain BisB5).